The primary structure comprises 483 residues: Glutamate--tRNA ligase 1 (483 aa).

The 'HIGH' region signature appears at 9-19 (PSPTGFLHIGG). The 'KMSKS' region motif lies at 238 to 242 (KLSKR). Lys241 provides a ligand contact to ATP.

This sequence belongs to the class-I aminoacyl-tRNA synthetase family. Glutamate--tRNA ligase type 1 subfamily. In terms of assembly, monomer.

It is found in the cytoplasm. It carries out the reaction tRNA(Glu) + L-glutamate + ATP = L-glutamyl-tRNA(Glu) + AMP + diphosphate. Its function is as follows. Catalyzes the attachment of glutamate to tRNA(Glu) in a two-step reaction: glutamate is first activated by ATP to form Glu-AMP and then transferred to the acceptor end of tRNA(Glu). This chain is Glutamate--tRNA ligase 1, found in Bartonella henselae (strain ATCC 49882 / DSM 28221 / CCUG 30454 / Houston 1) (Rochalimaea henselae).